The chain runs to 355 residues: Peptide chain release factor 1 (355 aa).

Gln231 is subject to N5-methylglutamine. Positions 280-291 are enriched in basic and acidic residues; the sequence is SERLAKESEARK. Positions 280-303 are disordered; the sequence is SERLAKESEARKSQVGSGDRSERI.

This sequence belongs to the prokaryotic/mitochondrial release factor family. Post-translationally, methylated by PrmC. Methylation increases the termination efficiency of RF1.

The protein resides in the cytoplasm. Functionally, peptide chain release factor 1 directs the termination of translation in response to the peptide chain termination codons UAG and UAA. The polypeptide is Peptide chain release factor 1 (Campylobacter jejuni subsp. jejuni serotype O:6 (strain 81116 / NCTC 11828)).